The following is a 385-amino-acid chain: Putative glutamate--cysteine ligase 2 (385 aa).

It belongs to the glutamate--cysteine ligase type 2 family. YbdK subfamily.

The enzyme catalyses L-cysteine + L-glutamate + ATP = gamma-L-glutamyl-L-cysteine + ADP + phosphate + H(+). In terms of biological role, ATP-dependent carboxylate-amine ligase which exhibits weak glutamate--cysteine ligase activity. The polypeptide is Putative glutamate--cysteine ligase 2 (Solibacter usitatus (strain Ellin6076)).